The primary structure comprises 292 residues: Phosphatidylglycerol--prolipoprotein diacylglyceryl transferase (292 aa).

7 helical membrane-spanning segments follow: residues 25–45, 70–90, 102–122, 138–158, 193–213, 217–237, and 255–275; these read ITLH…WWYA, FVVW…VLVW, IIAV…IIIA, FDII…CNFI, FMEG…FKAF, GTVS…SEVY, and GFTY…YLLL. Arg-153 is a binding site for a 1,2-diacyl-sn-glycero-3-phospho-(1'-sn-glycerol).

This sequence belongs to the Lgt family.

Its subcellular location is the cell inner membrane. The enzyme catalyses L-cysteinyl-[prolipoprotein] + a 1,2-diacyl-sn-glycero-3-phospho-(1'-sn-glycerol) = an S-1,2-diacyl-sn-glyceryl-L-cysteinyl-[prolipoprotein] + sn-glycerol 1-phosphate + H(+). The protein operates within protein modification; lipoprotein biosynthesis (diacylglyceryl transfer). Functionally, catalyzes the transfer of the diacylglyceryl group from phosphatidylglycerol to the sulfhydryl group of the N-terminal cysteine of a prolipoprotein, the first step in the formation of mature lipoproteins. The protein is Phosphatidylglycerol--prolipoprotein diacylglyceryl transferase of Bartonella tribocorum (strain CIP 105476 / IBS 506).